We begin with the raw amino-acid sequence, 259 residues long: tRNA pseudouridine synthase A (259 aa).

Aspartate 51 acts as the Nucleophile in catalysis. Residue tyrosine 109 coordinates substrate.

It belongs to the tRNA pseudouridine synthase TruA family. Homodimer.

The enzyme catalyses uridine(38/39/40) in tRNA = pseudouridine(38/39/40) in tRNA. Formation of pseudouridine at positions 38, 39 and 40 in the anticodon stem and loop of transfer RNAs. The polypeptide is tRNA pseudouridine synthase A (Nitrosococcus oceani (strain ATCC 19707 / BCRC 17464 / JCM 30415 / NCIMB 11848 / C-107)).